Consider the following 432-residue polypeptide: Trigger factor (432 aa).

A PPIase FKBP-type domain is found at 161-246; it reads GTRATINFVG…VVKVEARELP (86 aa).

It belongs to the FKBP-type PPIase family. Tig subfamily.

Its subcellular location is the cytoplasm. It carries out the reaction [protein]-peptidylproline (omega=180) = [protein]-peptidylproline (omega=0). Involved in protein export. Acts as a chaperone by maintaining the newly synthesized protein in an open conformation. Functions as a peptidyl-prolyl cis-trans isomerase. The chain is Trigger factor from Aliivibrio salmonicida (strain LFI1238) (Vibrio salmonicida (strain LFI1238)).